The primary structure comprises 94 residues: Cell division protein FtsB (94 aa).

Residues 1–3 (MRA) lie on the Cytoplasmic side of the membrane. A helical transmembrane segment spans residues 4–21 (FAVLLIIALGWLQYTLWF). The Periplasmic segment spans residues 22–94 (GKNGMEDYAQ…YRIIDENSEE (73 aa)). Residues 40 to 60 (EEVNQGLRNRNGQMFAEIDDL) are a coiled coil.

This sequence belongs to the FtsB family. Part of a complex composed of FtsB, FtsL and FtsQ.

Its subcellular location is the cell inner membrane. Its function is as follows. Essential cell division protein. May link together the upstream cell division proteins, which are predominantly cytoplasmic, with the downstream cell division proteins, which are predominantly periplasmic. This Aliivibrio salmonicida (strain LFI1238) (Vibrio salmonicida (strain LFI1238)) protein is Cell division protein FtsB.